A 424-amino-acid chain; its full sequence is S-adenosylmethionine synthase (424 aa).

His-16 contacts ATP. Asp-18 provides a ligand contact to Mg(2+). Glu-44 is a K(+) binding site. L-methionine is bound by residues Glu-57 and Gln-100. Residues 100–110 are flexible loop; sequence QSPDIAQGVNT. ATP-binding positions include 175 to 177, 251 to 252, Asp-260, 266 to 267, Ala-283, and Lys-287; these read DGK, KF, and RK. Asp-260 contacts L-methionine. Residue Lys-291 coordinates L-methionine.

Belongs to the AdoMet synthase family. In terms of assembly, homotetramer; dimer of dimers. Requires Mg(2+) as cofactor. The cofactor is K(+).

Its subcellular location is the cytoplasm. It carries out the reaction L-methionine + ATP + H2O = S-adenosyl-L-methionine + phosphate + diphosphate. Its pathway is amino-acid biosynthesis; S-adenosyl-L-methionine biosynthesis; S-adenosyl-L-methionine from L-methionine: step 1/1. Its function is as follows. Catalyzes the formation of S-adenosylmethionine (AdoMet) from methionine and ATP. The overall synthetic reaction is composed of two sequential steps, AdoMet formation and the subsequent tripolyphosphate hydrolysis which occurs prior to release of AdoMet from the enzyme. This is S-adenosylmethionine synthase from Nostoc punctiforme (strain ATCC 29133 / PCC 73102).